Here is a 172-residue protein sequence, read N- to C-terminus: Large ribosomal subunit protein uL10 (172 aa).

It belongs to the universal ribosomal protein uL10 family. As to quaternary structure, part of the ribosomal stalk of the 50S ribosomal subunit. The N-terminus interacts with L11 and the large rRNA to form the base of the stalk. The C-terminus forms an elongated spine to which L12 dimers bind in a sequential fashion forming a multimeric L10(L12)X complex.

In terms of biological role, forms part of the ribosomal stalk, playing a central role in the interaction of the ribosome with GTP-bound translation factors. The chain is Large ribosomal subunit protein uL10 (rplJ) from Chlamydia trachomatis serovar D (strain ATCC VR-885 / DSM 19411 / UW-3/Cx).